We begin with the raw amino-acid sequence, 469 residues long: Acetyl-CoA decarbonylase/synthase complex subunit beta 1 (469 aa).

Residues Cys189, Cys192, Cys278, and Cys280 each coordinate [Ni-Fe-S] cluster.

This sequence belongs to the CdhC family. Monomer. The ACDS complex is made up of alpha, epsilon, beta, gamma and delta chains with a probable stoichiometry of (alpha(2)epsilon(2))(4)-beta(8)-(gamma(1)delta(1))(8) (Potential). The cofactor is [Ni-Fe-S] cluster.

The enzyme catalyses Co(I)-[corrinoid Fe-S protein] + acetyl-CoA + H(+) = methyl-Co(III)-[corrinoid Fe-S protein] + CO + CoA. It functions in the pathway one-carbon metabolism; methanogenesis from acetate. Functionally, part of a complex that catalyzes the reversible cleavage of acetyl-CoA, allowing growth on acetate as sole source of carbon and energy. The alpha-epsilon complex generates CO from CO(2), while the beta subunit (this protein) combines the CO with CoA and a methyl group to form acetyl-CoA. The methyl group, which is incorporated into acetyl-CoA, is transferred to the beta subunit by a corrinoid iron-sulfur protein (the gamma-delta complex). In Methanosarcina thermophila, this protein is Acetyl-CoA decarbonylase/synthase complex subunit beta 1 (cdhC1).